The following is a 512-amino-acid chain: ATP synthase subunit alpha (512 aa).

169–176 (GDRQTGKT) contributes to the ATP binding site.

The protein belongs to the ATPase alpha/beta chains family. F-type ATPases have 2 components, CF(1) - the catalytic core - and CF(0) - the membrane proton channel. CF(1) has five subunits: alpha(3), beta(3), gamma(1), delta(1), epsilon(1). CF(0) has three main subunits: a(1), b(2) and c(9-12). The alpha and beta chains form an alternating ring which encloses part of the gamma chain. CF(1) is attached to CF(0) by a central stalk formed by the gamma and epsilon chains, while a peripheral stalk is formed by the delta and b chains.

Its subcellular location is the cell inner membrane. It catalyses the reaction ATP + H2O + 4 H(+)(in) = ADP + phosphate + 5 H(+)(out). In terms of biological role, produces ATP from ADP in the presence of a proton gradient across the membrane. The alpha chain is a regulatory subunit. This Ruegeria pomeroyi (strain ATCC 700808 / DSM 15171 / DSS-3) (Silicibacter pomeroyi) protein is ATP synthase subunit alpha.